The following is a 272-amino-acid chain: HMP-PP phosphatase (272 aa).

D8 serves as the catalytic Nucleophile. D8, D10, and D212 together coordinate Mg(2+).

The protein belongs to the HAD-like hydrolase superfamily. Cof family. The cofactor is Mg(2+).

The catalysed reaction is 4-amino-2-methyl-5-(diphosphooxymethyl)pyrimidine + H2O = 4-amino-2-methyl-5-(phosphooxymethyl)pyrimidine + phosphate + H(+). Functionally, catalyzes the hydrolysis of 4-amino-2-methyl-5-hydroxymethylpyrimidine pyrophosphate (HMP-PP) to 4-amino-2-methyl-5-hydroxymethylpyrimidine phosphate (HMP-P). This Citrobacter koseri (strain ATCC BAA-895 / CDC 4225-83 / SGSC4696) protein is HMP-PP phosphatase.